A 728-amino-acid chain; its full sequence is Phosphoribosylformylglycinamidine synthase subunit PurL (728 aa).

Residue His54 is part of the active site. ATP is bound by residues Tyr57 and Lys96. Position 98 (Glu98) interacts with Mg(2+). Substrate-binding positions include 99-102 (SHNH) and Arg121. The active-site Proton acceptor is the His100. Asp122 is a binding site for Mg(2+). Gln245 serves as a coordination point for substrate. Asp273 lines the Mg(2+) pocket. Residue 317–319 (ETQ) coordinates substrate. Residues Asp495 and Gly532 each coordinate ATP. Asn533 provides a ligand contact to Mg(2+). Ser535 contacts substrate.

It belongs to the FGAMS family. As to quaternary structure, monomer. Part of the FGAM synthase complex composed of 1 PurL, 1 PurQ and 2 PurS subunits.

The protein localises to the cytoplasm. The catalysed reaction is N(2)-formyl-N(1)-(5-phospho-beta-D-ribosyl)glycinamide + L-glutamine + ATP + H2O = 2-formamido-N(1)-(5-O-phospho-beta-D-ribosyl)acetamidine + L-glutamate + ADP + phosphate + H(+). Its pathway is purine metabolism; IMP biosynthesis via de novo pathway; 5-amino-1-(5-phospho-D-ribosyl)imidazole from N(2)-formyl-N(1)-(5-phospho-D-ribosyl)glycinamide: step 1/2. Its function is as follows. Part of the phosphoribosylformylglycinamidine synthase complex involved in the purines biosynthetic pathway. Catalyzes the ATP-dependent conversion of formylglycinamide ribonucleotide (FGAR) and glutamine to yield formylglycinamidine ribonucleotide (FGAM) and glutamate. The FGAM synthase complex is composed of three subunits. PurQ produces an ammonia molecule by converting glutamine to glutamate. PurL transfers the ammonia molecule to FGAR to form FGAM in an ATP-dependent manner. PurS interacts with PurQ and PurL and is thought to assist in the transfer of the ammonia molecule from PurQ to PurL. The chain is Phosphoribosylformylglycinamidine synthase subunit PurL from Macrococcus caseolyticus (strain JCSC5402) (Macrococcoides caseolyticum).